The primary structure comprises 228 residues: Lipoprotein-releasing system ATP-binding protein LolD (228 aa).

Residues 6–228 (LRCKELSKSY…KNGILHKEQG (223 aa)) form the ABC transporter domain. An ATP-binding site is contributed by 42–49 (GASGSGKS).

This sequence belongs to the ABC transporter superfamily. Lipoprotein translocase (TC 3.A.1.125) family. As to quaternary structure, the complex is composed of two ATP-binding proteins (LolD) and two transmembrane proteins (LolC and LolE).

The protein resides in the cell inner membrane. Part of the ABC transporter complex LolCDE involved in the translocation of mature outer membrane-directed lipoproteins, from the inner membrane to the periplasmic chaperone, LolA. Responsible for the formation of the LolA-lipoprotein complex in an ATP-dependent manner. This is Lipoprotein-releasing system ATP-binding protein LolD from Idiomarina loihiensis (strain ATCC BAA-735 / DSM 15497 / L2-TR).